The sequence spans 310 residues: uncharacterized protein (310 aa).

A coiled-coil region spans residues 269–307; the sequence is DLAELERKKSLAEIHKKAAMAKKREEKKKIKQELKKSAK. Residues 290 to 304 are compositionally biased toward basic and acidic residues; that stretch reads KKREEKKKIKQELKK. The segment at 290–310 is disordered; it reads KKREEKKKIKQELKKSAKGKK.

This is an uncharacterized protein from Magallana gigas (Pacific oyster).